Here is a 106-residue protein sequence, read N- to C-terminus: MGKMNVRKGDKVVVITGKDAGKRGKIIEAIPDKNKVIVEGVNVVKRHSRPTRKLPQGGIQEKEAPIDSSNVMLLCARCHKPTRVGRRILDDGTKVRVCKKCGEALQ.

This sequence belongs to the universal ribosomal protein uL24 family. In terms of assembly, part of the 50S ribosomal subunit.

Its function is as follows. One of two assembly initiator proteins, it binds directly to the 5'-end of the 23S rRNA, where it nucleates assembly of the 50S subunit. In terms of biological role, one of the proteins that surrounds the polypeptide exit tunnel on the outside of the subunit. In Desulforudis audaxviator (strain MP104C), this protein is Large ribosomal subunit protein uL24.